Consider the following 1060-residue polypeptide: Isoleucine--tRNA ligase (1060 aa).

Positions 55-65 match the 'HIGH' region motif; the sequence is PTANGTPGVHH. A 'KMSKS' region motif is present at residues 608–612; the sequence is KMSKH. Lys-611 is a binding site for ATP.

It belongs to the class-I aminoacyl-tRNA synthetase family. IleS type 2 subfamily. Monomer. The cofactor is Zn(2+).

The protein resides in the cytoplasm. The catalysed reaction is tRNA(Ile) + L-isoleucine + ATP = L-isoleucyl-tRNA(Ile) + AMP + diphosphate. In terms of biological role, catalyzes the attachment of isoleucine to tRNA(Ile). As IleRS can inadvertently accommodate and process structurally similar amino acids such as valine, to avoid such errors it has two additional distinct tRNA(Ile)-dependent editing activities. One activity is designated as 'pretransfer' editing and involves the hydrolysis of activated Val-AMP. The other activity is designated 'posttransfer' editing and involves deacylation of mischarged Val-tRNA(Ile). The protein is Isoleucine--tRNA ligase of Thermobifida fusca (strain YX).